We begin with the raw amino-acid sequence, 1785 residues long: Brefeldin A-inhibited guanine nucleotide-exchange protein 2 (1785 aa).

Residue Met1 is modified to N-acetylmethionine. The interval 2-224 is DCB; DCB:DCB domain and DCB:HUS domain interaction; the sequence is QESQTKSMFV…KPQSPVIQAA (223 aa). 3 positions are modified to phosphoserine: Ser214, Ser218, and Ser227. The disordered stretch occupies residues 232–285; sequence RLKHSQAQSKPTTPEKTDLTNGEHARSDSGKVSTENGDAPRERGSSLSGTDDGA. Thr244 carries the post-translational modification Phosphothreonine. The segment covering 244–260 has biased composition (basic and acidic residues); sequence TPEKTDLTNGEHARSDS. Ser277, Ser348, and Ser349 each carry phosphoserine. Positions 508–528 are HUS; DCB:HUS domain interaction; sequence ADAQCVVDIYVNYDCDLNAAN. Ser614 carries the phosphoserine modification. Residue Thr616 is modified to Phosphothreonine. A Phosphoserine modification is found at Ser617. The residue at position 626 (Thr626) is a Phosphothreonine. One can recognise an SEC7 domain in the interval 654–785; it reads FNKKPKRGIQ…IIMLTTDLHS (132 aa). A phosphoserine mark is found at Ser700, Ser1511, Ser1513, Ser1514, Ser1525, Ser1528, Ser1534, and Ser1782. A compositionally biased stretch (polar residues) spans 1514 to 1532; it reads SIDKNPSERGQSQLSNPTD. The segment at 1514–1535 is disordered; the sequence is SIDKNPSERGQSQLSNPTDDSW.

In terms of assembly, homodimer. Interacts with ARFGEF1/BIG1; both proteins are probably part of the same or very similar macromolecular complexes. Interacts with PRKAR1A, PRKAR2A, PRKAR1B, PRKAR2B, PPP1CC, PDE3A, TNFRSF1A, MYCBP and EXOC7. Interacts with GABRB1, GABRB2 and GABRB3. In terms of processing, in vitro phosphorylated by PKA reducing its GEF activity and dephosphorylated by phosphatase PP1. As to expression, expressed in placenta, lung, heart, brain, kidney and pancreas.

The protein resides in the cytoplasm. The protein localises to the membrane. Its subcellular location is the golgi apparatus. It is found in the perinuclear region. It localises to the trans-Golgi network. The protein resides in the endosome. The protein localises to the cytoskeleton. Its subcellular location is the microtubule organizing center. It is found in the centrosome. It localises to the cell projection. The protein resides in the dendrite. The protein localises to the cytoplasmic vesicle. Its subcellular location is the synapse. With respect to regulation, inhibited by brefeldin A. Functionally, promotes guanine-nucleotide exchange on ARF1 and ARF3 and to a lower extent on ARF5 and ARF6. Promotes the activation of ARF1/ARF5/ARF6 through replacement of GDP with GTP. Involved in the regulation of Golgi vesicular transport. Required for the integrity of the endosomal compartment. Involved in trafficking from the trans-Golgi network (TGN) to endosomes and is required for membrane association of the AP-1 complex and GGA1. Seems to be involved in recycling of the transferrin receptor from recycling endosomes to the plasma membrane. Probably is involved in the exit of GABA(A) receptors from the endoplasmic reticulum. Involved in constitutive release of tumor necrosis factor receptor 1 via exosome-like vesicles; the function seems to involve PKA and specifically PRKAR2B. Proposed to act as A kinase-anchoring protein (AKAP) and may mediate crosstalk between Arf and PKA pathways. The protein is Brefeldin A-inhibited guanine nucleotide-exchange protein 2 (ARFGEF2) of Homo sapiens (Human).